The primary structure comprises 506 residues: Nucleoside import ATP-binding protein NupA (506 aa).

2 ABC transporter domains span residues 7–242 (IQMI…VGRS) and 259–503 (LEIK…VGGN). 39–46 (GENGAGKS) lines the ATP pocket.

The protein belongs to the ABC transporter superfamily. In terms of assembly, the complex is composed of two ATP-binding proteins (NupA), two transmembrane proteins (NupB and NupC) and a solute-binding protein (BmpA).

It is found in the cell membrane. Part of an ABC transporter complex involved in the uptake of all common nucleosides. Responsible for energy coupling to the transport system. In Lactococcus lactis subsp. cremoris (strain MG1363), this protein is Nucleoside import ATP-binding protein NupA.